A 186-amino-acid chain; its full sequence is C-type lectin 37Da (186 aa).

Positions 1 to 20 (MLKTLVQLFLVVAGFAPGFG) are cleaved as a signal peptide. N-linked (GlcNAc...) asparagine glycosylation is found at asparagine 35 and asparagine 47. The C-type lectin domain maps to 46-169 (INESYYVFGQ…CHNHASSLFK (124 aa)). Cysteine 140 and cysteine 160 are disulfide-bonded.

The protein resides in the secreted. Its function is as follows. Galactose-specific lectin that displays calcium-dependent activity. Binds to the surface of hemocytes and enhances hemocyte encapsulation and melanization. This is likely by interacting with carbohydrates on the surface of the hemocytes. Also displays agglutination activity against the Gram-negative bacterium E.coli. The polypeptide is C-type lectin 37Da (Drosophila melanogaster (Fruit fly)).